Consider the following 94-residue polypeptide: Citrate lyase acyl carrier protein (94 aa).

Serine 14 is modified (O-(phosphoribosyl dephospho-coenzyme A)serine).

Belongs to the CitD family. Oligomer with a subunit composition of (alpha,beta,gamma)6.

It is found in the cytoplasm. Functionally, covalent carrier of the coenzyme of citrate lyase. The protein is Citrate lyase acyl carrier protein of Fusobacterium nucleatum subsp. nucleatum (strain ATCC 25586 / DSM 15643 / BCRC 10681 / CIP 101130 / JCM 8532 / KCTC 2640 / LMG 13131 / VPI 4355).